Consider the following 445-residue polypeptide: Phosphoglucosamine mutase (445 aa).

Serine 99 acts as the Phosphoserine intermediate in catalysis. The Mg(2+) site is built by serine 99, aspartate 242, aspartate 244, and aspartate 246. The residue at position 99 (serine 99) is a Phosphoserine.

The protein belongs to the phosphohexose mutase family. The cofactor is Mg(2+). In terms of processing, activated by phosphorylation.

The catalysed reaction is alpha-D-glucosamine 1-phosphate = D-glucosamine 6-phosphate. Its function is as follows. Catalyzes the conversion of glucosamine-6-phosphate to glucosamine-1-phosphate. The chain is Phosphoglucosamine mutase from Campylobacter lari (strain RM2100 / D67 / ATCC BAA-1060).